Reading from the N-terminus, the 699-residue chain is Elongation factor G (699 aa).

The region spanning Glu8 to Ile283 is the tr-type G domain. GTP-binding positions include Ala17–Thr24, Asp81–His85, and Asn135–Asp138.

It belongs to the TRAFAC class translation factor GTPase superfamily. Classic translation factor GTPase family. EF-G/EF-2 subfamily.

It localises to the cytoplasm. In terms of biological role, catalyzes the GTP-dependent ribosomal translocation step during translation elongation. During this step, the ribosome changes from the pre-translocational (PRE) to the post-translocational (POST) state as the newly formed A-site-bound peptidyl-tRNA and P-site-bound deacylated tRNA move to the P and E sites, respectively. Catalyzes the coordinated movement of the two tRNA molecules, the mRNA and conformational changes in the ribosome. The chain is Elongation factor G from Rickettsia conorii (strain ATCC VR-613 / Malish 7).